Here is a 576-residue protein sequence, read N- to C-terminus: Low-affinity glucose transporter HXT4 (576 aa).

The segment at 1–56 is disordered; it reads MSEEAAYQEDTAVQNTPADALSPVESDSNSALSTPSNKAERDDMKDFDENHEESNN. The Cytoplasmic portion of the chain corresponds to 1 to 66; it reads MSEEAAYQED…YVEIPKKPAS (66 aa). Residues 25–37 show a composition bias toward polar residues; that stretch reads ESDSNSALSTPSN. The span at 38–54 shows a compositional bias: basic and acidic residues; it reads KAERDDMKDFDENHEES. Residue K45 forms a Glycyl lysine isopeptide (Lys-Gly) (interchain with G-Cter in ubiquitin) linkage. Residues 67–87 form a helical membrane-spanning segment; sequence AYVTVSICCLMVAFGGFVFGW. At 88–122 the chain is on the extracellular side; it reads DTGTISGFVAQTDFIRRFGMKHHDGTYYLSKVRTG. The chain crosses the membrane as a helical span at residues 123–143; sequence LIVSIFNIGCAIGGIILARLG. The Cytoplasmic portion of the chain corresponds to 144–149; the sequence is DMYGRK. Residues 150-170 traverse the membrane as a helical segment; the sequence is MGLIVVVVIYIIGIIIQIASI. The Extracellular portion of the chain corresponds to 171 to 180; sequence NKWYQYFIGR. The chain crosses the membrane as a helical span at residues 181 to 201; sequence IISGLGVGGIAVLSPMLISEV. Over 202-207 the chain is Cytoplasmic; it reads SPKHIR. A helical membrane pass occupies residues 208-228; the sequence is GTLVSCYQLMITLGIFLGYCT. The Extracellular segment spans residues 229-242; sequence NYGTKTYTNSVQWR. Residues 243-263 form a helical membrane-spanning segment; it reads VPLGLGFAWALFMIGGMTFVP. At 264-346 the chain is on the cytoplasmic side; sequence ESPRYLVEVG…IQSLQQLTGD (83 aa). The helical transmembrane segment at 347–363 threads the bilayer; it reads NYFFYYGTTVFTAVGLE. The Extracellular portion of the chain corresponds to 364–369; that stretch reads DSFETS. Residues 370 to 387 traverse the membrane as a helical segment; that stretch reads IVLGIVNFASTFVGIFLV. Residues 388-394 lie on the Cytoplasmic side of the membrane; the sequence is ERYGRRR. A helical membrane pass occupies residues 395 to 415; it reads CLLWGAASMTACMVVFASVGV. Residues 416-437 lie on the Extracellular side of the membrane; the sequence is TRLWPNGKKNGSSKGAGNCMIV. The N-linked (GlcNAc...) asparagine glycan is linked to N425. A helical transmembrane segment spans residues 438–458; sequence FTCFYLFCFATTWAPIPFVVN. Residues 459 to 475 lie on the Cytoplasmic side of the membrane; that stretch reads SETFPLRVKSKCMAIAQ. Residues 476 to 496 form a helical membrane-spanning segment; that stretch reads ACNWIWGFLIGFFTPFISGAI. D497 is a topological domain (extracellular). The chain crosses the membrane as a helical span at residues 498–518; it reads FYYGYVFMGCLVFSYFYVFFF. Over 519–576 the chain is Cytoplasmic; sequence VPETKGLTLEEVNTLWEEGVLPWKSPSWVPPNKRGTDYNADDLMHDDQPFYKKMFGKK.

This sequence belongs to the major facilitator superfamily. Sugar transporter (TC 2.A.1.1) family.

The protein resides in the cell membrane. With respect to regulation, xylose uptake is strongly inhibited by glucose. Functionally, low-affinity glucose transporter. Can also transport xylose. The polypeptide is Low-affinity glucose transporter HXT4 (HXT4) (Saccharomyces cerevisiae (strain YJM789) (Baker's yeast)).